We begin with the raw amino-acid sequence, 513 residues long: MPGLGRRAQWLCWWWGLLCSCCGPPPLRPPLPAAAAAAAGGQLLGDGGSPGRTEQPPPSPQSSSGFLYRRLKTQEKREMQKEILSVLGLPHRPRPLHGLQQPQPPALRQQEEQQQQQQLPRGEPPPGRLKSAPLFMLDLYNALSADNDEDGASEGERQQSWPHEAASSSQRRQPPPGAAHPLNRKSLLAPGSGSGGASPLTSAQDSAFLNDADMVMSFVNLVEYDKEFSPRQRHHKEFKFNLSQIPEGEVVTAAEFRIYKDCVMGSFKNQTFLISIYQVLQEHQHRDSDLFLLDTRVVWASEEGWLEFDITATSNLWVVTPQHNMGLQLSVVTRDGVHVHPRAAGLVGRDGPYDKQPFMVAFFKVSEVHVRTTRSASSRRRQQSRNRSTQSQDVARVSSASDYNSSELKTACRKHELYVSFQDLGWQDWIIAPKGYAANYCDGECSFPLNAHMNATNHAIVQTLVHLMNPEYVPKPCCAPTKLNAISVLYFDDNSNVILKKYRNMVVRACGCH.

The signal sequence occupies residues 1–20 (MPGLGRRAQWLCWWWGLLCS). The propeptide occupies 21–374 (CCGPPPLRPP…VSEVHVRTTR (354 aa)). Disordered regions lie at residues 38–66 (AAGG…SSGF), 89–131 (LPHR…RLKS), and 145–200 (ADND…ASPL). Residues 98–121 (GLQQPQPPALRQQEEQQQQQQLPR) show a composition bias toward low complexity. The segment covering 158 to 172 (QQSWPHEAASSSQRR) has biased composition (polar residues). 5 N-linked (GlcNAc...) asparagine glycosylation sites follow: N241, N269, N386, N404, and N454. The segment at 373-398 (TRSASSRRRQQSRNRSTQSQDVARVS) is disordered. 3 disulfide bridges follow: C412/C478, C441/C510, and C445/C512.

Belongs to the TGF-beta family. As to quaternary structure, interacts with SOSTDC1. Interacts (when glycosylated) with type I receptor ACVR1; the interaction may induce HAMP expression. Interacts with type II receptor ACVR2B. Interacts with Hemojuvelin/HJV. Interacts with ERFE; the interaction inhibits BMP-induced transcription of HAMP. Interacts with BMPR1A/ALK3. Forms heterodimers with BMP2 in vitro; the heterodimer then binds to its receptor BMPR1A /ALK3 and may induce HAMP expression. Glycosylated at Asn-454. Glycosylation is crucial for recognition by the activin receptor type I/ACVR1.

Its subcellular location is the secreted. In terms of biological role, growth factor of the TGF-beta superfamily that plays essential roles in many developmental processes including cartilage and bone formation. Also plays an important role in the regulation of HAMP/hepcidin expression and iron metabolism by acting as a ligand for hemojuvelin/HJV. Also acts to promote expression of HAMP, potentially via the interaction with its receptor BMPR1A/ALK3. Initiates the canonical BMP signaling cascade by associating with type I receptor ACVR1 and type II receptor ACVR2B. In turn, ACVR1 propagates signal by phosphorylating SMAD1/5/8 that travel to the nucleus and act as activators and repressors of transcription of target. Can also signal through non-canonical pathway such as TAZ-Hippo signaling cascade to modulate VEGF signaling by regulating VEGFR2 expression. In Homo sapiens (Human), this protein is Bone morphogenetic protein 6 (BMP6).